A 184-amino-acid polypeptide reads, in one-letter code: uncharacterized protein (184 aa).

The chain crosses the membrane as a helical span at residues 35–55 (LSFLIYILYTFSISGLSTFVI).

It localises to the membrane. This is an uncharacterized protein from Schizosaccharomyces pombe (strain 972 / ATCC 24843) (Fission yeast).